Here is a 200-residue protein sequence, read N- to C-terminus: Outer-membrane lipoprotein carrier protein (200 aa).

Residues 1–18 form the signal peptide; the sequence is MKAVVFAMVMAVSFNVFA.

This sequence belongs to the LolA family. In terms of assembly, monomer.

Its subcellular location is the periplasm. Functionally, participates in the translocation of lipoproteins from the inner membrane to the outer membrane. Only forms a complex with a lipoprotein if the residue after the N-terminal Cys is not an aspartate (The Asp acts as a targeting signal to indicate that the lipoprotein should stay in the inner membrane). The protein is Outer-membrane lipoprotein carrier protein of Idiomarina loihiensis (strain ATCC BAA-735 / DSM 15497 / L2-TR).